Consider the following 1068-residue polypeptide: Protein AF-10 (1068 aa).

The segment at 22 to 74 (IGGCCVCSDERGWAENPLVYCDGHGCSVAVHQACYGIVQVPTGPWFCRKCESQ) adopts a PHD-type 1 zinc-finger fold. The segment at 79–112 (RVRCELCPHKDGALKRTDNGGWAHVVCALYIPEV) adopts a C2HC pre-PHD-type zinc-finger fold. The required for interaction with histone H3 stretch occupies residues 106-190 (ALYIPEVQFA…EGNGADNVQY (85 aa)). The segment at 135–198 (KTCYICDEQG…QYCGYCKYHF (64 aa)) adopts a PHD-type 2 zinc-finger fold. Residues 207 to 260 (GSNRSYEQSLSDSSSHSQDKHHEKEKKKYKEKDKHKQKHKKQPEPSPALVPSLT) are disordered. Residue Ser217 is modified to Phosphoserine. Residues 223 to 240 (SQDKHHEKEKKKYKEKDK) are compositionally biased toward basic and acidic residues. Ser252 carries the post-translational modification Phosphoserine. A Glycyl lysine isopeptide (Lys-Gly) (interchain with G-Cter in SUMO2) cross-link involves residue Lys280. A compositionally biased stretch (polar residues) spans 296–305 (EVSAHTSSGK). Disordered stretches follow at residues 296 to 416 (EVSA…SFSS) and 428 to 506 (SQPK…SVAS). Residues 306 to 317 (DVSEARGSEGKG) show a composition bias toward basic and acidic residues. Polar residues predominate over residues 340–351 (TAVSASSPFPQG). Over residues 352-372 (SFSGTPGSVKSSSGSSVQSPQ) the composition is skewed to low complexity. Polar residues-rich tracts occupy residues 387–396 (YTHTQQPSST), 404–416 (SGSQ…SFSS), and 428–446 (SQPK…SSLP). At Ser436 the chain carries Phosphoserine. Residues 465 to 483 (EKKRKGNKQSKHGPGRPKG) show a composition bias toward basic residues. Residues 490 to 506 (VSHLSVSSASPTSSVAS) show a composition bias toward low complexity. The residue at position 532 (Ser532) is a Phosphoserine. A compositionally biased stretch (low complexity) spans 583 to 594 (SGSGSSTPVSSS). 2 disordered regions span residues 583–613 (SGSG…LSPS) and 660–698 (SESS…NLQL). A compositionally biased stretch (polar residues) spans 595-604 (HIPQQSSGHL). Residues 681–692 (SSPRGSLSPRSP) show a composition bias toward low complexity. Ser686, Ser688, and Ser691 each carry phosphoserine. Residues 752 to 780 (LQVENRRLEEQIKNLTAKKERLQLLNAQL) form a leucine-zipper region. Disordered stretches follow at residues 786-869 (AITT…VSGV) and 1040-1068 (PFLT…QEKS). Residues 787-816 (ITTNPSPSHQMHTYTAQTAPPPDSLNSSKS) are compositionally biased toward polar residues. Low complexity-rich tracts occupy residues 836–850 (LTSS…SALS) and 857–869 (QSPA…VSGV). Residues 1040–1054 (PFLTIHGDSTSQKVT) show a composition bias toward polar residues.

In terms of assembly, self-associates. Interacts with FSTL3; the interaction enhances MLLT10 in vitro transcriptional activity and self-association. Interacts with YEATS4. Interacts with SS18. Interacts with DOT1L. Interacts with histone H3; interaction is necessary for MLLT10 binding to nucleosomes; interaction is inhibited by histone H3 'Lys-27' methylations (H3K27me1, H3K27me2 and H3K27me3) amd acetylation; interaction stabilizes association of MLLT10 at chromatin; interaction is essential for histone H3 'Lys-79' dimethylation (H3K79me2).

It is found in the nucleus. In terms of biological role, probably involved in transcriptional regulation. Binds to cruciform DNA. In cells, binding to unmodified histone H3 regulates DOT1L functions including histone H3 'Lys-79' dimethylation (H3K79me2) and gene activation. This Mus musculus (Mouse) protein is Protein AF-10.